Consider the following 43-residue polypeptide: Defensin (43 aa).

Intrachain disulfides connect Cys-3/Cys-34, Cys-20/Cys-39, and Cys-24/Cys-41.

It localises to the secreted. Its function is as follows. Antibacterial peptide. Affects Gram-negative bacteria including methicillin-resistant Staphylococcus aureus. This is Defensin from Trypoxylus dichotomus (Japanese rhinoceros beetle).